Consider the following 238-residue polypeptide: uncharacterized protein (238 aa).

An N-terminal signal peptide occupies residues 1–28 (MSRNSRGSGRYVFVVLACVFGYTRAVHA).

This is an uncharacterized protein from Treponema pallidum (strain Nichols).